The sequence spans 163 residues: Transcription elongation factor GreA (163 aa).

A coiled-coil region spans residues 45–65 (NAEYHAAREKQAFIEARINEL).

The protein belongs to the GreA/GreB family.

Functionally, necessary for efficient RNA polymerase transcription elongation past template-encoded arresting sites. The arresting sites in DNA have the property of trapping a certain fraction of elongating RNA polymerases that pass through, resulting in locked ternary complexes. Cleavage of the nascent transcript by cleavage factors such as GreA or GreB allows the resumption of elongation from the new 3'terminus. GreA releases sequences of 2 to 3 nucleotides. The sequence is that of Transcription elongation factor GreA from Helicobacter hepaticus (strain ATCC 51449 / 3B1).